Reading from the N-terminus, the 323-residue chain is o-succinylbenzoate synthase (323 aa).

Lysine 134 acts as the Proton donor in catalysis. The Mg(2+) site is built by aspartate 162, glutamate 191, and aspartate 214. Residue lysine 236 is the Proton acceptor of the active site.

The protein belongs to the mandelate racemase/muconate lactonizing enzyme family. MenC type 1 subfamily. Requires a divalent metal cation as cofactor.

The catalysed reaction is (1R,6R)-6-hydroxy-2-succinyl-cyclohexa-2,4-diene-1-carboxylate = 2-succinylbenzoate + H2O. Its pathway is quinol/quinone metabolism; 1,4-dihydroxy-2-naphthoate biosynthesis; 1,4-dihydroxy-2-naphthoate from chorismate: step 4/7. It participates in quinol/quinone metabolism; menaquinone biosynthesis. Functionally, converts 2-succinyl-6-hydroxy-2,4-cyclohexadiene-1-carboxylate (SHCHC) to 2-succinylbenzoate (OSB). This chain is o-succinylbenzoate synthase, found in Yersinia pseudotuberculosis serotype IB (strain PB1/+).